The primary structure comprises 597 residues: Myrcene synthase, chloroplastic (597 aa).

The N-terminal 56 residues, 1–56, are a transit peptide targeting the chloroplast; the sequence is MALKLLTSLPMYNFSRVPVSSKDPILLVTSRTRNGYLARPVQCMVANKVSTSPDIL. Residues Arg-310, Asp-347, Asp-351, Arg-488, and Asp-491 each coordinate (2E)-geranyl diphosphate. Residues Asp-347 and Asp-351 each contribute to the Mg(2+) site. The DDXXD motif motif lies at 347-351; sequence DDVYD. Residues Asp-491, Thr-495, and Glu-499 each coordinate Mg(2+).

It belongs to the terpene synthase family. Tpsb subfamily. Mg(2+) is required as a cofactor. It depends on Mn(2+) as a cofactor.

The protein resides in the plastid. It localises to the chloroplast. It carries out the reaction (2E)-geranyl diphosphate = beta-myrcene + diphosphate. Involved in monoterpene (C10) biosynthesis. The major product is myrcene followed by minor amounts (1.2%) of the cyclic monoterpene limonene. The chain is Myrcene synthase, chloroplastic from Quercus ilex (Holly oak).